Here is a 413-residue protein sequence, read N- to C-terminus: CinA-like protein (413 aa).

Belongs to the CinA family.

The polypeptide is CinA-like protein (Crocosphaera subtropica (strain ATCC 51142 / BH68) (Cyanothece sp. (strain ATCC 51142))).